Consider the following 318-residue polypeptide: Pantothenate kinase (318 aa).

96-103 (GSVAVGKS) is an ATP binding site.

This sequence belongs to the prokaryotic pantothenate kinase family.

It is found in the cytoplasm. The enzyme catalyses (R)-pantothenate + ATP = (R)-4'-phosphopantothenate + ADP + H(+). The protein operates within cofactor biosynthesis; coenzyme A biosynthesis; CoA from (R)-pantothenate: step 1/5. In Rhodopseudomonas palustris (strain HaA2), this protein is Pantothenate kinase.